The primary structure comprises 324 residues: Phospho-N-acetylmuramoyl-pentapeptide-transferase (324 aa).

10 helical membrane passes run 5 to 25, 57 to 77, 81 to 101, 117 to 137, 147 to 167, 176 to 196, 203 to 223, 227 to 247, 250 to 270, and 302 to 322; these read AIVI…PLFI, IMIL…IAGL, TYLL…DDMI, FIGQ…SGFS, WSVD…VGGS, LDGL…VLAW, VAVF…FNAH, VFMG…VAVL, LELL…SVII, and IVVT…YIEV.

Belongs to the glycosyltransferase 4 family. MraY subfamily. It depends on Mg(2+) as a cofactor.

The protein localises to the cell membrane. It carries out the reaction UDP-N-acetyl-alpha-D-muramoyl-L-alanyl-gamma-D-glutamyl-meso-2,6-diaminopimeloyl-D-alanyl-D-alanine + di-trans,octa-cis-undecaprenyl phosphate = di-trans,octa-cis-undecaprenyl diphospho-N-acetyl-alpha-D-muramoyl-L-alanyl-D-glutamyl-meso-2,6-diaminopimeloyl-D-alanyl-D-alanine + UMP. The protein operates within cell wall biogenesis; peptidoglycan biosynthesis. Functionally, catalyzes the initial step of the lipid cycle reactions in the biosynthesis of the cell wall peptidoglycan: transfers peptidoglycan precursor phospho-MurNAc-pentapeptide from UDP-MurNAc-pentapeptide onto the lipid carrier undecaprenyl phosphate, yielding undecaprenyl-pyrophosphoryl-MurNAc-pentapeptide, known as lipid I. This is Phospho-N-acetylmuramoyl-pentapeptide-transferase from Geobacillus kaustophilus (strain HTA426).